The chain runs to 177 residues: VQ motif-containing protein 11 (177 aa).

Positions 25–34 (FRNIVQKLTG) match the VQ motif. Phosphoserine occurs at positions 43, 99, 115, 142, and 145. Positions 115–133 (SAREEHHAQPDKEEQKAIA) are enriched in basic and acidic residues. The interval 115–177 (SAREEHHAQP…RIHEDNHRDS (63 aa)) is disordered. The segment covering 148 to 159 (EPAPELLPLFPL) has biased composition (low complexity). A Phosphoserine modification is found at Ser161. A compositionally biased stretch (basic and acidic residues) spans 168 to 177 (RIHEDNHRDS).

Phosphorylated on serine residues by MPK6.

The protein localises to the nucleus. In terms of biological role, may modulate WRKY transcription factor activities. The polypeptide is VQ motif-containing protein 11 (Arabidopsis thaliana (Mouse-ear cress)).